Here is a 603-residue protein sequence, read N- to C-terminus: MSFVGGGADCSANSNAIAQFNKHTQQDRSLQRQAANQQGIVQNGQGFKKDSMMNERERQNMDQFMNNGPSQSNFQFQPMRHELNMIQQNHKQPNVQNNWTNEFQTNSPSPVQRNTPLAKTGSPANAQWATEFQQPMDQTFNQSNQQQFNNMPNMRMGGYRPMMGMSMMGGGMHQQQNQMQHQEQNQDHQVDWDNQFKEIEQLTNETKDAEAEQVKGEEEPEIVIDDKYQATFQEVWDSLNSEEVENDFINQQYEEFKNTQRDSMPADMAQWEKDFAKYASTRAHFGDYQFEDNQHNQFLDLPKESDPYEIGLQLMENGAKLSEAALAFEAAIQRNEGHINAWLKLGEVQTQNEKEIAGISALEKCLELHPENSEALMTLAISYINEGYDNAAFATLERWISTKYPQVADQARQQNPAIDDEDRFSLNKRVTELFLNAAQLSPNSANMDPDVQMGLGVLFYANEDFDKTIDCFKAALSIKPDDAVLWNRLGASLANSNRSEEAVDAYFKALELKPTFVRARYNLGVSCINIGCYKEAAEHLLSGLSMHQVEGVQTDASSTLNHNQSTSLTETLKRAFIALDRRDLLEKVKPDMDINQFRGEFSF.

Cys-10 participates in a covalent cross-link: Glycyl cysteine thioester (Cys-Gly) (interchain with G-Cter in ubiquitin). The tract at residues 11 to 33 (SANSNAIAQFNKHTQQDRSLQRQ) is amphipathic helix 1 (AH1). Residue Lys-22 forms a Glycyl lysine isopeptide (Lys-Gly) (interchain with G-Cter in ubiquitin) linkage. Residues 23–49 (HTQQDRSLQRQAANQQGIVQNGQGFKK) form a disordered region. The segment covering 31–45 (QRQAANQQGIVQNGQ) has biased composition (polar residues). The segment at 58–76 (RQNMDQFMNNGPSQSNFQF) is amphipathic helix 2 (AH2). Short sequence motifs (wxxxF/Y motif) lie at residues 99-103 (WTNEF), 128-132 (WATEF), and 192-196 (WDNQF). Positions 232 to 248 (FQEVWDSLNSEEVENDF) are amphipathic helix 4 (AH4). The WxxxF/Y motif 4 motif lies at 271–275 (WEKDF). 5 TPR repeats span residues 304–338 (ESDP…NEGH), 339–372 (INAW…HPEN), 449–482 (PDVQ…KPDD), 484–516 (VLWN…KPTF), and 518–550 (RARY…HQVE).

The protein belongs to the peroxisomal targeting signal receptor family. Interacts (via WxxxF/Y and LVxEF motifs) with PEX14; promoting translocation through the PEX13-PEX14 docking complex. Monoubiquitinated at Cys-10 by PEX2 during PEX5 passage through the retrotranslocation channel: monoubiquitination acts as a signal for PEX5 extraction and is required for proper export from peroxisomes and recycling. When PEX5 recycling is compromised, polyubiquitinated at Lys-22 by PEX10 during its passage through the retrotranslocation channel, leading to its degradation.

It is found in the cytoplasm. The protein localises to the cytosol. It localises to the peroxisome matrix. Its function is as follows. Receptor that mediates peroxisomal import of proteins containing a C-terminal PTS1-type tripeptide peroxisomal targeting signal (SKL-type). Binds to cargo proteins containing a PTS1 peroxisomal targeting signal in the cytosol, and translocates them into the peroxisome matrix by passing through the PEX13-PEX14 docking complex along with cargo proteins. PEX5 receptor is then retrotranslocated into the cytosol, leading to release of bound cargo in the peroxisome matrix, and reset for a subsequent peroxisome import cycle. This Debaryomyces hansenii (strain ATCC 36239 / CBS 767 / BCRC 21394 / JCM 1990 / NBRC 0083 / IGC 2968) (Yeast) protein is Peroxisomal targeting signal receptor (PEX5).